The sequence spans 105 residues: Pyrimidine/purine nucleoside phosphorylase (105 aa).

This sequence belongs to the nucleoside phosphorylase PpnP family.

It catalyses the reaction a purine D-ribonucleoside + phosphate = a purine nucleobase + alpha-D-ribose 1-phosphate. It carries out the reaction adenosine + phosphate = alpha-D-ribose 1-phosphate + adenine. The enzyme catalyses cytidine + phosphate = cytosine + alpha-D-ribose 1-phosphate. The catalysed reaction is guanosine + phosphate = alpha-D-ribose 1-phosphate + guanine. It catalyses the reaction inosine + phosphate = alpha-D-ribose 1-phosphate + hypoxanthine. It carries out the reaction thymidine + phosphate = 2-deoxy-alpha-D-ribose 1-phosphate + thymine. The enzyme catalyses uridine + phosphate = alpha-D-ribose 1-phosphate + uracil. The catalysed reaction is xanthosine + phosphate = alpha-D-ribose 1-phosphate + xanthine. Functionally, catalyzes the phosphorolysis of diverse nucleosides, yielding D-ribose 1-phosphate and the respective free bases. Can use uridine, adenosine, guanosine, cytidine, thymidine, inosine and xanthosine as substrates. Also catalyzes the reverse reactions. The sequence is that of Pyrimidine/purine nucleoside phosphorylase from Cupriavidus taiwanensis (strain DSM 17343 / BCRC 17206 / CCUG 44338 / CIP 107171 / LMG 19424 / R1) (Ralstonia taiwanensis (strain LMG 19424)).